Reading from the N-terminus, the 151-residue chain is MDEKDLATQPQETGQDPRLPGQDAHPRGAQGAEAQAAEGPLAAHAQGAPLKSLKGDSAFRRLRQGRTGRGRYVTVRWLPAPELRVGIVVSKKVGKTVVRNRVKRRLREILRRLHLPRAHLLLVATPEAREAGFAELFQDLTRALKKSGLVQ.

Residues M1 to L62 are disordered. The span at G28–A48 shows a compositional bias: low complexity.

The protein belongs to the RnpA family. As to quaternary structure, consists of a catalytic RNA component (M1 or rnpB) and a protein subunit.

It carries out the reaction Endonucleolytic cleavage of RNA, removing 5'-extranucleotides from tRNA precursor.. RNaseP catalyzes the removal of the 5'-leader sequence from pre-tRNA to produce the mature 5'-terminus. It can also cleave other RNA substrates such as 4.5S RNA. The protein component plays an auxiliary but essential role in vivo by binding to the 5'-leader sequence and broadening the substrate specificity of the ribozyme. The sequence is that of Ribonuclease P protein component from Thermus oshimai.